Here is a 347-residue protein sequence, read N- to C-terminus: F-box/LRR-repeat/kelch-repeat protein At2g27520 (347 aa).

One can recognise an F-box domain in the interval 1 to 50; sequence MVRLDLPWDLVDEILSRLPATSLGRLRFTCKRWNALFKDPEFITKQFHKA. LRR repeat units lie at residues 59–82, 152–177, 196–220, and 261–285; these read LSNF…EIAQ, CKLV…NVEK, KFNI…LYQD, and LSWS…ILRI. The Kelch 1 repeat unit spans residues 138–187; the sequence is KSYDSYKILRITYGCKLVEIFELKSNSWRVLSKVHPNVEKHYYGGVSFKG. A Kelch 2 repeat occupies 306–347; sequence MIYIVGKNGFKKLSYEKDRSNLWRLPFFFSYVPSLVGLYPPM.

This is F-box/LRR-repeat/kelch-repeat protein At2g27520 from Arabidopsis thaliana (Mouse-ear cress).